The following is a 330-amino-acid chain: MTKIMFFGTRDYEKEMALNWGKKNNVEVTTSKELLSSATVDQLKDYDGVTTMQFGKLEDDVYPKLESYGIKQIAQRTAGFDMYDLDLAKKHNIVISNVPSYSPETIAEYSVSIALQLVRRFPDIERRVQAHDFTWQAEIMSKPVKNMTVAIIGTGRIGAATAKIYAGFGATITAYDAYPNKDLDFLTYKDSVKEAIKDADIISLHVPANKESYHLFDKAMFDHVKKGAILVNAARGAVINTPDLIAAVNDGTLLGAAIDTYENEAAYFTNDWTNKDIDDKTLLELIEHERILVTPHIAFFSDEAVQNLVEGGLNAALSVINTSTCETRLN.

NAD(+) contacts are provided by residues Arg156–Ile157, Asp176, Val206–Pro207, Ala233–Arg235, and Asp259. The active site involves Arg235. Glu264 is an active-site residue. Catalysis depends on His296, which acts as the Proton donor.

The protein belongs to the D-isomer specific 2-hydroxyacid dehydrogenase family.

It carries out the reaction (R)-lactate + NAD(+) = pyruvate + NADH + H(+). The polypeptide is D-lactate dehydrogenase (ldhD) (Staphylococcus aureus (strain MSSA476)).